The following is a 352-amino-acid chain: 4-hydroxy-2-oxovalerate aldolase (352 aa).

The Pyruvate carboxyltransferase domain maps to 14–266 (VRMTDTSLRD…KTGIDFFDIA (253 aa)). Residue 22-23 (RD) participates in substrate binding. Mn(2+) is bound at residue Asp23. The active-site Proton acceptor is His26. 2 residues coordinate substrate: Ser176 and His205. Residues His205 and His207 each coordinate Mn(2+). Residue Tyr296 participates in substrate binding.

It belongs to the 4-hydroxy-2-oxovalerate aldolase family.

It carries out the reaction (S)-4-hydroxy-2-oxopentanoate = acetaldehyde + pyruvate. This is 4-hydroxy-2-oxovalerate aldolase from Mycolicibacterium gilvum (strain PYR-GCK) (Mycobacterium gilvum (strain PYR-GCK)).